We begin with the raw amino-acid sequence, 207 residues long: Urease accessory protein UreG (207 aa).

Glycine 16–threonine 23 is a GTP binding site.

This sequence belongs to the SIMIBI class G3E GTPase family. UreG subfamily. As to quaternary structure, homodimer. UreD, UreF and UreG form a complex that acts as a GTP-hydrolysis-dependent molecular chaperone, activating the urease apoprotein by helping to assemble the nickel containing metallocenter of UreC. The UreE protein probably delivers the nickel.

The protein resides in the cytoplasm. Its function is as follows. Facilitates the functional incorporation of the urease nickel metallocenter. This process requires GTP hydrolysis, probably effectuated by UreG. This chain is Urease accessory protein UreG, found in Cupriavidus metallidurans (strain ATCC 43123 / DSM 2839 / NBRC 102507 / CH34) (Ralstonia metallidurans).